Here is a 232-residue protein sequence, read N- to C-terminus: Small ribosomal subunit protein uS2 (232 aa).

Belongs to the universal ribosomal protein uS2 family.

This is Small ribosomal subunit protein uS2 from Heliobacterium modesticaldum (strain ATCC 51547 / Ice1).